A 432-amino-acid chain; its full sequence is UDP-N-acetylmuramate--L-alanine ligase (432 aa).

108–114 (GAHGKTS) contributes to the ATP binding site.

It belongs to the MurCDEF family.

It localises to the cytoplasm. The catalysed reaction is UDP-N-acetyl-alpha-D-muramate + L-alanine + ATP = UDP-N-acetyl-alpha-D-muramoyl-L-alanine + ADP + phosphate + H(+). The protein operates within cell wall biogenesis; peptidoglycan biosynthesis. In terms of biological role, cell wall formation. The protein is UDP-N-acetylmuramate--L-alanine ligase of Bacillus velezensis (strain DSM 23117 / BGSC 10A6 / LMG 26770 / FZB42) (Bacillus amyloliquefaciens subsp. plantarum).